The chain runs to 333 residues: Fe(3+)-citrate import system permease protein YfmE (333 aa).

8 helical membrane-spanning segments follow: residues 12–32 (LLAILILAVILIVLSVISIGI), 65–85 (IILAILAGAGLAAAGAILQGV), 95–115 (VVGISKGSGLAAMAVILIFPE), 120–140 (VLPFSAFAGAAIIAVLLLMIA), 194–214 (EVKLLAPWLLILFPIVCILIP), 238–258 (FILIFTAVALAGSCVAVVGSI), 279–299 (YLLPASALIGAIILLIADTLG), and 306–326 (VEIPAGILTAVIGAPYFLYLL).

This sequence belongs to the binding-protein-dependent transport system permease family. FecCD subfamily. In terms of assembly, the complex is composed of one ATP-binding protein (YfmF), two transmembrane proteins (YfmD and YfmE) and a solute-binding protein (YfmC).

It is found in the cell membrane. In terms of biological role, part of the ABC transporter complex YfmCDEF involved in citrate-dependent Fe(3+) import. Involved in the translocation of the substrate across the membrane. The protein is Fe(3+)-citrate import system permease protein YfmE (yfmE) of Bacillus subtilis (strain 168).